Consider the following 263-residue polypeptide: Cysteine-rich repeat secretory protein 55 (263 aa).

An N-terminal signal peptide occupies residues 1–20 (MKTLVVKCFLLLALVCSCRA). 2 consecutive Gnk2-homologous domains span residues 22–126 (DSIW…QENF) and 132–240 (TGAG…FYPF).

The protein belongs to the cysteine-rich repeat secretory protein family.

It is found in the secreted. In Arabidopsis thaliana (Mouse-ear cress), this protein is Cysteine-rich repeat secretory protein 55 (CRRSP55).